We begin with the raw amino-acid sequence, 1074 residues long: DNA double-strand break repair Rad50 ATPase (1074 aa).

Residues arginine 12, 32-38 (NGSGKSS), and glutamine 142 each bind ATP. Coiled coils occupy residues 355–402 (ELEK…REKA) and 452–506 (NLVE…KGLG). Residues 512 to 611 (LENLEDFSEL…KITRLKDAKK (100 aa)) form the Zinc-hook domain. Zn(2+) is bound by residues cysteine 559 and cysteine 562. Coiled coils occupy residues 574–611 (TAEECEDKKEKLASELADIKVQHAELEKKITRLKDAKK), 649–678 (LKLESLDKRKQELETSGRQLLSDIKTLQVQ), 749–823 (KEKL…EILE), and 865–895 (TEEKDSLLKEIGMLENSLKRLRELRKELKAL). Residue 973 to 978 (LLSGGE) participates in ATP binding.

The protein belongs to the SMC family. RAD50 subfamily. Homodimer. Forms a heterotetramer composed of two Mre11 subunits and two Rad50 subunits. Zn(2+) serves as cofactor.

Its function is as follows. Part of the Rad50/Mre11 complex, which is involved in the early steps of DNA double-strand break (DSB) repair. The complex may facilitate opening of the processed DNA ends to aid in the recruitment of HerA and NurA. Rad50 controls the balance between DNA end bridging and DNA resection via ATP-dependent structural rearrangements of the Rad50/Mre11 complex. The protein is DNA double-strand break repair Rad50 ATPase of Methanosarcina acetivorans (strain ATCC 35395 / DSM 2834 / JCM 12185 / C2A).